Consider the following 144-residue polypeptide: Large ribosomal subunit protein uL14 (144 aa).

Belongs to the universal ribosomal protein uL14 family. In terms of assembly, part of the 50S ribosomal subunit. Forms a cluster with proteins L3 and L24e, part of which may contact the 16S rRNA in 2 intersubunit bridges.

Functionally, binds to 23S rRNA. Forms part of two intersubunit bridges in the 70S ribosome. The polypeptide is Large ribosomal subunit protein uL14 (Pyrobaculum arsenaticum (strain DSM 13514 / JCM 11321 / PZ6)).